We begin with the raw amino-acid sequence, 365 residues long: UDP-N-acetylglucosamine--N-acetylmuramyl-(pentapeptide) pyrophosphoryl-undecaprenol N-acetylglucosamine transferase (365 aa).

Residues 17-19 (TGG), N129, R167, S194, I250, 269-274 (ALTVSE), and Q295 each bind UDP-N-acetyl-alpha-D-glucosamine.

The protein belongs to the glycosyltransferase 28 family. MurG subfamily.

It localises to the cell inner membrane. The enzyme catalyses di-trans,octa-cis-undecaprenyl diphospho-N-acetyl-alpha-D-muramoyl-L-alanyl-D-glutamyl-meso-2,6-diaminopimeloyl-D-alanyl-D-alanine + UDP-N-acetyl-alpha-D-glucosamine = di-trans,octa-cis-undecaprenyl diphospho-[N-acetyl-alpha-D-glucosaminyl-(1-&gt;4)]-N-acetyl-alpha-D-muramoyl-L-alanyl-D-glutamyl-meso-2,6-diaminopimeloyl-D-alanyl-D-alanine + UDP + H(+). It participates in cell wall biogenesis; peptidoglycan biosynthesis. Cell wall formation. Catalyzes the transfer of a GlcNAc subunit on undecaprenyl-pyrophosphoryl-MurNAc-pentapeptide (lipid intermediate I) to form undecaprenyl-pyrophosphoryl-MurNAc-(pentapeptide)GlcNAc (lipid intermediate II). The polypeptide is UDP-N-acetylglucosamine--N-acetylmuramyl-(pentapeptide) pyrophosphoryl-undecaprenol N-acetylglucosamine transferase (Shewanella sediminis (strain HAW-EB3)).